Consider the following 115-residue polypeptide: Large ribosomal subunit protein uL24 (115 aa).

The segment at 49–68 (NMKTKHHPPSKDQEKGSITK) is disordered.

Belongs to the universal ribosomal protein uL24 family. Part of the 50S ribosomal subunit.

Functionally, one of two assembly initiator proteins, it binds directly to the 5'-end of the 23S rRNA, where it nucleates assembly of the 50S subunit. In terms of biological role, one of the proteins that surrounds the polypeptide exit tunnel on the outside of the subunit. The protein is Large ribosomal subunit protein uL24 of Phytoplasma australiense.